Consider the following 963-residue polypeptide: VPS35 endosomal protein-sorting factor-like (963 aa).

The tract at residues Ser43–Leu69 is disordered. Residues Ser53–Leu69 show a composition bias toward low complexity. Ser265 carries the post-translational modification Phosphoserine. Residues Ala703 to Phe719 form a helical membrane-spanning segment.

The protein belongs to the VPS35L family. As to quaternary structure, component of the heterotrimeric retriever complex formed by VPS26C, VPS29 and VPS35L. Interacts with VPS29. Interacts with COMMD1, CCDC93 and CCDC22; associates with the CCC (COMMD/CCDC22/CCDC93) complex which contains at least COMMD1 (and possibly other COMM domain-containing proteins), CCDC22 and CCDC93. Interacts with WASHC1, WASHC2A and WASHC2C. Interacts with SNX17 and SNX31.

It is found in the membrane. Its subcellular location is the endosome. Acts as a component of the retriever complex. The retriever complex is a heterotrimeric complex related to retromer cargo-selective complex (CSC) and essential for retromer-independent retrieval and recycling of numerous cargos such as integrin alpha-5/beta-1 (ITGA5:ITGB1). The recruitment of the retriever complex to the endosomal membrane involves CCC and WASH complexes. In the endosomes, drives the retrieval and recycling of NxxY-motif-containing cargo proteins by coupling to SNX17, a cargo essential for the homeostatic maintenance of numerous cell surface proteins associated with processes that include cell migration, cell adhesion, nutrient supply and cell signaling. Involved in copper-dependent ATP7A trafficking between the trans-Golgi network and vesicles in the cell periphery; the function is proposed to depend on its association with the CCC complex and cooperation with the WASH complex on early endosomes. Seems not to be required for CCC complex stability. In terms of biological role, (Microbial infection) The heterotrimeric retriever complex, in collaboration with the CCC complex, mediates the exit of human papillomavirus to the cell surface. In Homo sapiens (Human), this protein is VPS35 endosomal protein-sorting factor-like.